Consider the following 86-residue polypeptide: Large ribosomal subunit protein bL31B (86 aa).

The protein belongs to the bacterial ribosomal protein bL31 family. Type B subfamily. In terms of assembly, part of the 50S ribosomal subunit.

The polypeptide is Large ribosomal subunit protein bL31B (Streptococcus pyogenes serotype M1).